Reading from the N-terminus, the 278-residue chain is Potassium/proton antiporter CemA (278 aa).

The next 4 membrane-spanning stretches (helical) occupy residues 61–81, 155–175, 203–223, and 238–258; these read ILLL…FVFG, AVKN…LMIT, IILF…EVII, and FIFL…KYWI.

The protein belongs to the CemA family.

Its subcellular location is the plastid. The protein resides in the chloroplast inner membrane. The enzyme catalyses K(+)(in) + H(+)(out) = K(+)(out) + H(+)(in). In terms of biological role, contributes to K(+)/H(+) antiport activity by supporting proton efflux to control proton extrusion and homeostasis in chloroplasts in a light-dependent manner to modulate photosynthesis. Prevents excessive induction of non-photochemical quenching (NPQ) under continuous-light conditions. Indirectly promotes efficient inorganic carbon uptake into chloroplasts. This chain is Potassium/proton antiporter CemA, found in Pyropia yezoensis (Susabi-nori).